A 195-amino-acid chain; its full sequence is Transmembrane protein 126A (195 aa).

The Mitochondrial matrix portion of the chain corresponds to 1–33 (MENHKSNNKENITIVDISRKINQLPEAERNLLE). Residues 34-54 (NGSVYVGLNAALCGLIANSLF) form a helical membrane-spanning segment. The Mitochondrial intermembrane segment spans residues 55–56 (RR). Residues 57–77 (ILNVTKARIAAGLPMAGIPFL) form a helical membrane-spanning segment. Topologically, residues 78–110 (TTDLTYRCFVSFPLNTGDLDCETCTITRSGLTG) are mitochondrial matrix. The chain crosses the membrane as a helical span at residues 111-131 (LVIGGLYPVFLAIPVNGGLAA). Residues 132–158 (RYQSALLPHKGNILSYWIRTSKPVFRK) lie on the Mitochondrial intermembrane side of the membrane. A helical transmembrane segment spans residues 159 to 175 (MLFPILLQTMFSAYLGS). The Mitochondrial matrix portion of the chain corresponds to 176 to 195 (EQYKLLIKALQLSEPGKEIH).

It belongs to the TMEM126 family. In terms of assembly, interacts with OXA1L; promoting cotranslational quality control in mitochondria. As to expression, strongly expressed in brain, cerebellum, skeletal muscle, testis. High expression also found in fetal brain, fetal retinal pigmentary epithelium, and fetal retina. Highly expressed in retinal ganglion cells.

The protein localises to the mitochondrion inner membrane. Functionally, protein required for the cotranslational protein quality control in the inner membrane of the mitochondria. Associates with newly synthesized polypeptides and may act as a chaperone that cooperates with OXA1L for the insertion of newly synthesized mitochondrial proteins into the inner membrane. Required for the assembly of the ND4 module of mitochondrial complex I. The sequence is that of Transmembrane protein 126A from Homo sapiens (Human).